The following is a 573-amino-acid chain: MEEIRELVLKYALINAYTHRGKANPKAVIGKVLGENPELRKRAKEIIPLVNEVVNEVNSLSLEEQEAKLREIYPEFFEEKNEKKEEKKGLPPLPKAERGKVVTRFAPNPDGAFHLGNARAAILSHEYARMYDGKFILRFDDTDPKVKRPEPIFYEWIKEDLEWLGFRIDEIHIASDRLEIYYDYAEKLIKMGKAYVCTCPPEKFRELRDKGIACPHREEPVEVQLERWRKMLNGEYREGEAVVRIKTDLNHPNPAVRDWPALRIIDNPNHPRTGNKYRVWPLYNFASAIDDHELGVTHIFRGQEHAENETRQRYVYEYFGWEYPVTVHHGRLSIEGVILSKSKTRKGIEEGKYLGWDDPRLGTIRALRRRGIKPEAIRELIIEVGLKRSDTTISWDNLAAINRKIIEPIANRYFFVADPIPMYVEGAQEFTAEIPLHPDYPERGVRRLKFEPDKPVYVSKDDMELFKPGNFVRLKDLFNVEIMEVNENGIRARFHSFEYEVARENRWRMVHWVTEGKACEVWVPEGDELIIREGLLESDADVKVDDIVQFERFGFVRIDDVRPEKVVAIFAHK.

The 'HIGH' region motif lies at 107–117 (PNPDGAFHLGN).

The protein belongs to the class-I aminoacyl-tRNA synthetase family. Glutamate--tRNA ligase type 2 subfamily.

Its subcellular location is the cytoplasm. It catalyses the reaction tRNA(Glu) + L-glutamate + ATP = L-glutamyl-tRNA(Glu) + AMP + diphosphate. Functionally, catalyzes the attachment of glutamate to tRNA(Glu) in a two-step reaction: glutamate is first activated by ATP to form Glu-AMP and then transferred to the acceptor end of tRNA(Glu). The sequence is that of Glutamate--tRNA ligase from Thermococcus kodakarensis (strain ATCC BAA-918 / JCM 12380 / KOD1) (Pyrococcus kodakaraensis (strain KOD1)).